The following is a 131-amino-acid chain: Small nuclear ribonucleoprotein SmD3b (131 aa).

Positions 7–79 (IPVKLLHEAS…VRFMVIPDIL (73 aa)) constitute a Sm domain. Positions 96–131 (SSSLGVGRGRGAMRGKPAAGPGRGTGGRGAVPPVRR) are disordered.

Belongs to the snRNP core protein family. Expressed in young seedlings, roots, leaves, flowers and immature siliques.

The protein localises to the cytoplasm. It is found in the cytosol. It localises to the nucleus. Core component of the spliceosomal U1, U2, U4 and U5 small nuclear ribonucleoproteins (snRNPs), the building blocks of the spliceosome. May play a major role in the splicing of cellular pre-mRNAs. Required for normal plant development. This is Small nuclear ribonucleoprotein SmD3b from Arabidopsis thaliana (Mouse-ear cress).